An 817-amino-acid polypeptide reads, in one-letter code: Cargo-transport protein YPP1 (817 aa).

It belongs to the YPP1 family. In terms of assembly, interacts with STT4 and ribosomes.

The protein resides in the cytoplasmic granule. The protein localises to the cell membrane. Involved in endocytosis. The protein is Cargo-transport protein YPP1 (YPP1) of Saccharomyces cerevisiae (strain YJM789) (Baker's yeast).